The following is a 248-amino-acid chain: Transcription factor MYB1 (248 aa).

2 consecutive HTH myb-type domains span residues 9-61 (KEGM…LNYL) and 62-116 (RPGI…GRRV). 2 consecutive DNA-binding regions (H-T-H motif) follow at residues 37–61 (WRSL…LNYL) and 89–112 (WSLI…NTNL). The disordered stretch occupies residues 118 to 144 (DQSHQHCRPNPTITSTKPADAPPANAN).

It localises to the nucleus. Its function is as follows. Transcription activator involved in the spatiotemporal regulation of flavonoid biosynthesis specifically in the corms of Montbretia. Activates the promoters of enzymes involved in the biosynthesis of the flavonol kaempferol and the flavonol-glycoside kaempferol-rhamnoside. In Crocosmia x crocosmiiflora (Montbretia), this protein is Transcription factor MYB1.